The sequence spans 668 residues: Metastasis-associated protein MTA2 (668 aa).

Positions 1–144 (MAANMYRVGD…PVQKTLLADQ (144 aa)) constitute a BAH domain. 2 positions are modified to phosphoserine: S52 and S54. An ELM2 domain is found at 145–256 (GEIRVGCKYQ…KAMSTLVPQG (112 aa)). K152 carries the N6-acetyllysine modification. An SANT domain is found at 263-315 (DEMEEWSASEAMLFEEALEKYGKDFNDIRQDFLPWKSLASIVQFYYMWKTTDR). A GATA-type; atypical zinc finger spans residues 367 to 394 (CESCHTTQSAQWYAWGPPNMQCRLCASC). The span at 409-419 (QLEGATRGTTE) shows a compositional bias: polar residues. The segment at 409 to 437 (QLEGATRGTTEPHSRGHLSRPEAQSLSPY) is disordered. Phosphoserine is present on residues S433 and S435. An N6-acetyllysine modification is found at K460. Residue K492 forms a Glycyl lysine isopeptide (Lys-Gly) (interchain with G-Cter in SUMO2 and SUMO3); alternate linkage. Residue K492 forms a Glycyl lysine isopeptide (Lys-Gly) (interchain with G-Cter in SUMO2); alternate linkage. K508 is covalently cross-linked (Glycyl lysine isopeptide (Lys-Gly) (interchain with G-Cter in SUMO2)). N6-acetyllysine occurs at positions 522 and 531. T534 bears the Phosphothreonine mark. Residue S548 is modified to Phosphoserine. Residues K559 and K595 each participate in a glycyl lysine isopeptide (Lys-Gly) (interchain with G-Cter in SUMO2) cross-link. 2 disordered regions span residues 580 to 599 (ASGI…LNPA) and 647 to 668 (PPVP…VLED).

The protein belongs to the metastasis-associated protein family. In terms of assembly, component of the nucleosome remodeling and deacetylase (NuRD) repressor complex, composed of core proteins MTA1, MTA2, MTA3, RBBP4, RBBP7, HDAC1, HDAC2, MBD2, MBD3, and peripherally associated proteins CDK2AP1, CDK2AP2, GATAD2A, GATAD2B, CHD3, CHD4 and CHD5. The exact stoichiometry of the NuRD complex is unknown, and some subunits such as MBD2 and MBD3, GATAD2A and GATAD2B, and CHD3, CHD4 and CHD5 define mutually exclusive NuRD complexes. Interacts with CHD3. Interacts with CHD4. Interacts with GATAD2A. Interacts with HDAC7. Interacts with MBD3. Interacts with p53/TP53. Interacts with MINT. Interacts with PIMREG. Interacts with NACC2. Interacts with ERCC6. Interacts with PWWP2B. Interacts with transcription factor BCL11A. Widely expressed.

Its subcellular location is the nucleus. May function as a transcriptional coregulator. Acts as a component of the histone deacetylase NuRD complex which participates in the remodeling of chromatin. The chain is Metastasis-associated protein MTA2 (MTA2) from Homo sapiens (Human).